Consider the following 513-residue polypeptide: Pantetheinase (513 aa).

Residues 1–22 (MITSPLLAYVAILFFCVLKASS) form the signal peptide. The 268-residue stretch at 40–307 (APLTPVSHEE…GKLLLSQLDS (268 aa)) folds into the CN hydrolase domain. Catalysis depends on glutamate 80, which acts as the Proton acceptor. The N-linked (GlcNAc...) asparagine glycan is linked to asparagine 147. Lysine 179 (proton donor) is an active-site residue. Residue cysteine 212 is the Nucleophile of the active site. N-linked (GlcNAc...) asparagine glycans are attached at residues asparagine 315 and asparagine 353. A lipid anchor (GPI-anchor amidated glycine) is attached at glycine 487. The propeptide at 488 to 513 (ASADLVAQGLRVMLGVIITIMYSLSW) is removed in mature form.

The protein belongs to the carbon-nitrogen hydrolase superfamily. BTD/VNN family. As to quaternary structure, monomer. Detected in kidney (at protein level).

Its subcellular location is the cell membrane. It catalyses the reaction (R)-pantetheine + H2O = cysteamine + (R)-pantothenate. Amidohydrolase that hydrolyzes specifically one of the carboamide linkages in D-pantetheine thus recycling pantothenic acid (vitamin B5) and releasing cysteamine. In Sus scrofa (Pig), this protein is Pantetheinase (VNN1).